The following is a 432-amino-acid chain: MDIRQLCGNAGVASVKMAALSGEVKNNALMKIADALLANSKRIIEANQHDLERSEKENLASPLLKRLKFDEKKINDVVEGIKSLMALEEPIGKTLLANKLDDELELYKVTCPIGVIGIIFESRPDALVQISTLCLKSGNCVLLKGGSEAKETNRVLTGVIEEATVAAGLPKGWIGLLESRDDVNEMLKMDQFIDLIIPRGSNDFVRYIMDNSRIPVMGHADGICHVYVDESADLEMAKKITVDSKTQYVAVCNATETLLVDRAVAKEFLPGLKAELDKKNVEIFGDEETADIIEVKPASDQDWATEYLDYIISIKIVAGMDEAIKHIITYGSGHTDCIVTKDKAKAVNFMNLVDSGNVFWNASTRFSDGFKYGFGAEVGISTSKLHARGPVGLDGLLSYKYMLIGNGQIVDDYATNKRQFKHERMNKQIDEI.

It belongs to the gamma-glutamyl phosphate reductase family.

It is found in the cytoplasm. The enzyme catalyses L-glutamate 5-semialdehyde + phosphate + NADP(+) = L-glutamyl 5-phosphate + NADPH + H(+). Its pathway is amino-acid biosynthesis; L-proline biosynthesis; L-glutamate 5-semialdehyde from L-glutamate: step 2/2. Its function is as follows. Catalyzes the NADPH-dependent reduction of L-glutamate 5-phosphate into L-glutamate 5-semialdehyde and phosphate. The product spontaneously undergoes cyclization to form 1-pyrroline-5-carboxylate. The protein is Gamma-glutamyl phosphate reductase of Ruminiclostridium cellulolyticum (strain ATCC 35319 / DSM 5812 / JCM 6584 / H10) (Clostridium cellulolyticum).